We begin with the raw amino-acid sequence, 94 residues long: Large ribosomal subunit protein eL43B (94 aa).

The C4-type zinc-finger motif lies at 39-62; that stretch reads CPFCGRLTVKRTAAGIWKCSGKGC.

It belongs to the eukaryotic ribosomal protein eL43 family. Component of the large ribosomal subunit (LSU). Mature yeast ribosomes consist of a small (40S) and a large (60S) subunit. The 40S small subunit contains 1 molecule of ribosomal RNA (18S rRNA) and at least 33 different proteins. The large 60S subunit contains 3 rRNA molecules (25S, 5.8S and 5S rRNA) and at least 46 different proteins.

The protein localises to the cytoplasm. Functionally, component of the ribosome, a large ribonucleoprotein complex responsible for the synthesis of proteins in the cell. The small ribosomal subunit (SSU) binds messenger RNAs (mRNAs) and translates the encoded message by selecting cognate aminoacyl-transfer RNA (tRNA) molecules. The large subunit (LSU) contains the ribosomal catalytic site termed the peptidyl transferase center (PTC), which catalyzes the formation of peptide bonds, thereby polymerizing the amino acids delivered by tRNAs into a polypeptide chain. The nascent polypeptides leave the ribosome through a tunnel in the LSU and interact with protein factors that function in enzymatic processing, targeting, and the membrane insertion of nascent chains at the exit of the ribosomal tunnel. This is Large ribosomal subunit protein eL43B (rpl4302) from Schizosaccharomyces pombe (strain 972 / ATCC 24843) (Fission yeast).